The primary structure comprises 116 residues: Large ribosomal subunit protein bL17 (116 aa).

It belongs to the bacterial ribosomal protein bL17 family. Part of the 50S ribosomal subunit. Contacts protein L32.

In Synechococcus elongatus (strain ATCC 33912 / PCC 7942 / FACHB-805) (Anacystis nidulans R2), this protein is Large ribosomal subunit protein bL17.